The chain runs to 458 residues: Argininosuccinate lyase (458 aa).

Belongs to the lyase 1 family. Argininosuccinate lyase subfamily.

The protein resides in the cytoplasm. It catalyses the reaction 2-(N(omega)-L-arginino)succinate = fumarate + L-arginine. It participates in amino-acid biosynthesis; L-arginine biosynthesis; L-arginine from L-ornithine and carbamoyl phosphate: step 3/3. The sequence is that of Argininosuccinate lyase from Salmonella choleraesuis (strain SC-B67).